Reading from the N-terminus, the 258-residue chain is Tryptophan synthase alpha chain (258 aa).

Residues glutamate 47 and aspartate 58 each act as proton acceptor in the active site.

The protein belongs to the TrpA family. As to quaternary structure, tetramer of two alpha and two beta chains.

The catalysed reaction is (1S,2R)-1-C-(indol-3-yl)glycerol 3-phosphate + L-serine = D-glyceraldehyde 3-phosphate + L-tryptophan + H2O. Its pathway is amino-acid biosynthesis; L-tryptophan biosynthesis; L-tryptophan from chorismate: step 5/5. In terms of biological role, the alpha subunit is responsible for the aldol cleavage of indoleglycerol phosphate to indole and glyceraldehyde 3-phosphate. The chain is Tryptophan synthase alpha chain from Bacillus anthracis (strain CDC 684 / NRRL 3495).